A 214-amino-acid polypeptide reads, in one-letter code: Glycoprotein Q2 (214 aa).

Positions 1–19 are cleaved as a signal peptide; sequence MHFLVVYILIHFHAYRGMA. Residues Asn41, Asn74, Asn110, and Asn210 are each glycosylated (N-linked (GlcNAc...) asparagine; by host).

As to quaternary structure, interacts with isoform gQ1. The heterodimer gQ1-gQ2 associates with the glycoprotein complex gH-gL to form a tetrameric complex. The gH/gL/gQ1/gQ2 complex binds to human receptor CD46. In terms of processing, glycosylated by host.

The protein resides in the virion membrane. It localises to the host endoplasmic reticulum-Golgi intermediate compartment. Functionally, plays a role in virus entry by participating in host receptor binding at the cell surface. The sequence is that of Glycoprotein Q2 from Human herpesvirus 6A (strain Uganda-1102) (HHV-6 variant A).